A 544-amino-acid polypeptide reads, in one-letter code: Methionine--tRNA ligase (544 aa).

Residues 10–20 (PYANGSLHLGH) carry the 'HIGH' region motif. The Zn(2+) site is built by C141, C144, C153, and C156. A 'KMSKS' region motif is present at residues 329–333 (KLSTS). T332 serves as a coordination point for ATP.

Belongs to the class-I aminoacyl-tRNA synthetase family. MetG type 1 subfamily. In terms of assembly, monomer. It depends on Zn(2+) as a cofactor.

The protein resides in the cytoplasm. The enzyme catalyses tRNA(Met) + L-methionine + ATP = L-methionyl-tRNA(Met) + AMP + diphosphate. In terms of biological role, is required not only for elongation of protein synthesis but also for the initiation of all mRNA translation through initiator tRNA(fMet) aminoacylation. The sequence is that of Methionine--tRNA ligase from Bacillus mycoides (strain KBAB4) (Bacillus weihenstephanensis).